Reading from the N-terminus, the 700-residue chain is Polyribonucleotide nucleotidyltransferase (700 aa).

The Mg(2+) site is built by Asp485 and Asp491. Residues 552-611 enclose the KH domain; sequence PRITTLKINPEKIRDVIGKGGATIRALTEETGTTIELEDDGTVKIASANGDATKEAIRRI. In terms of domain architecture, S1 motif spans 621 to 689; it reads GTVYNGKVVR…RQGRVRLSMK (69 aa).

Belongs to the polyribonucleotide nucleotidyltransferase family. As to quaternary structure, component of the RNA degradosome, which is a multiprotein complex involved in RNA processing and mRNA degradation. The cofactor is Mg(2+).

It localises to the cytoplasm. The catalysed reaction is RNA(n+1) + phosphate = RNA(n) + a ribonucleoside 5'-diphosphate. Functionally, involved in mRNA degradation. Catalyzes the phosphorolysis of single-stranded polyribonucleotides processively in the 3'- to 5'-direction. The polypeptide is Polyribonucleotide nucleotidyltransferase (Shewanella loihica (strain ATCC BAA-1088 / PV-4)).